An 804-amino-acid polypeptide reads, in one-letter code: Lon protease 2 (804 aa).

One can recognise a Lon N-terminal domain in the interval 6–199 (MPVCPVRGSV…AVLVLLEAEL (194 aa)). Residue 362–369 (GPPGVGKT) coordinates ATP. Positions 598–779 (EPQVGVATGM…DQVLDLALVG (182 aa)) constitute a Lon proteolytic domain. Active-site residues include serine 685 and lysine 728.

The protein belongs to the peptidase S16 family. As to quaternary structure, homohexamer. Organized in a ring with a central cavity.

The protein localises to the cytoplasm. The catalysed reaction is Hydrolysis of proteins in presence of ATP.. ATP-dependent serine protease that mediates the selective degradation of mutant and abnormal proteins as well as certain short-lived regulatory proteins. Required for cellular homeostasis and for survival from DNA damage and developmental changes induced by stress. Degrades polypeptides processively to yield small peptide fragments that are 5 to 10 amino acids long. Binds to DNA in a double-stranded, site-specific manner. This is Lon protease 2 from Thermus thermophilus (strain ATCC BAA-163 / DSM 7039 / HB27).